Here is a 141-residue protein sequence, read N- to C-terminus: Arsenate reductase (141 aa).

The Nucleophile; cysteine thioarsenate intermediate role is filled by Cys-12.

It belongs to the ArsC family.

It catalyses the reaction [glutaredoxin]-dithiol + arsenate + glutathione + H(+) = glutathionyl-S-S-[glutaredoxin] + arsenite + H2O. Its function is as follows. Involved in resistance to arsenate. Catalyzes the reduction of arsenate [As(V)] to arsenite [As(III)]. This Escherichia coli protein is Arsenate reductase.